Consider the following 506-residue polypeptide: Vinckepain-1 (506 aa).

The Cytoplasmic segment spans residues Met1–Thr32. A propeptide spans Met1–Asp262 (activation peptide). Residues Ile33–Phe53 traverse the membrane as a helical; Signal-anchor for type II membrane protein segment. The Lumenal segment spans residues Lys54 to Tyr506. 2 N-linked (GlcNAc...) asparagine glycosylation sites follow: Asn133 and Asn258. Cystine bridges form between Cys284–Cys326, Cys319–Cys359, Cys344–Cys364, and Cys413–Cys495. Cys287 is a catalytic residue. An N-linked (GlcNAc...) asparagine glycan is attached at Asn418. Residues His419 and Asn470 contribute to the active site.

The protein belongs to the peptidase C1 family.

Its subcellular location is the membrane. In terms of biological role, cysteine protease. This is Vinckepain-1 from Plasmodium vinckei.